The primary structure comprises 267 residues: Tryptophan synthase alpha chain (267 aa).

Catalysis depends on proton acceptor residues Glu-47 and Asp-58.

It belongs to the TrpA family. Tetramer of two alpha and two beta chains.

It carries out the reaction (1S,2R)-1-C-(indol-3-yl)glycerol 3-phosphate + L-serine = D-glyceraldehyde 3-phosphate + L-tryptophan + H2O. It functions in the pathway amino-acid biosynthesis; L-tryptophan biosynthesis; L-tryptophan from chorismate: step 5/5. Its function is as follows. The alpha subunit is responsible for the aldol cleavage of indoleglycerol phosphate to indole and glyceraldehyde 3-phosphate. The sequence is that of Tryptophan synthase alpha chain from Pelodictyon phaeoclathratiforme (strain DSM 5477 / BU-1).